We begin with the raw amino-acid sequence, 172 residues long: Large ribosomal subunit protein uL22y (172 aa).

Belongs to the universal ribosomal protein uL22 family.

This chain is Large ribosomal subunit protein uL22y, found in Hordeum vulgare (Barley).